Here is a 423-residue protein sequence, read N- to C-terminus: Pentamidine resistance factor, mitochondrial (423 aa).

Residues 199–219 (PVFFTLVFIFEEVSVLIFTFF) form a helical membrane-spanning segment.

In terms of assembly, interacts with COX18. This interaction may be essential for its insertion into mitochondrial inner membrane.

It is found in the mitochondrion inner membrane. Its function is as follows. Probably involved in mitochondrial export. Confers resistance to the anti-pneumocystis carinii drug pentamidine. May act by the removal of pentamidine, or its damage targets, from the matrix by an active-transport mechanism. This Saccharomyces cerevisiae (strain ATCC 204508 / S288c) (Baker's yeast) protein is Pentamidine resistance factor, mitochondrial (PNT1).